Reading from the N-terminus, the 495-residue chain is GTPase Der (495 aa).

An EngA-type G 1 domain is found at 3-178 (AKIALVGRPN…EMRDLLPEED (176 aa)). GTP is bound by residues 9 to 16 (GRPNVGKS), 57 to 61 (DTGGI), and 130 to 133 (NKVD). The tract at residues 190–227 (TAVASADADVDADVETEGGTSASETEEGITEETVEDEP) is disordered. Residues 213-227 (ETEEGITEETVEDEP) show a composition bias toward acidic residues. One can recognise an EngA-type G 2 domain in the interval 231–404 (LRLCMLGRPN…LAARIRRECS (174 aa)). GTP contacts are provided by residues 237 to 244 (GRPNAGKS), 284 to 288 (DTAGV), and 349 to 352 (NKMD). The 85-residue stretch at 405–489 (VRIPTGQLNR…PMRVHFRSSH (85 aa)) folds into the KH-like domain.

It belongs to the TRAFAC class TrmE-Era-EngA-EngB-Septin-like GTPase superfamily. EngA (Der) GTPase family. In terms of assembly, associates with the 50S ribosomal subunit.

Functionally, GTPase that plays an essential role in the late steps of ribosome biogenesis. The sequence is that of GTPase Der from Nitratidesulfovibrio vulgaris (strain DP4) (Desulfovibrio vulgaris).